Reading from the N-terminus, the 1403-residue chain is E3 ubiquitin-protein ligase SNT2 (1403 aa).

The segment at 40-62 is disordered; it reads SGAKTKGSNSQTPRNCKRTSNPA. A compositionally biased stretch (polar residues) spans 45 to 62; sequence KGSNSQTPRNCKRTSNPA. The BAH domain occupies 121-258; it reads VLLSANDTIY…RYTLKYYKVY (138 aa). The PHD-type 1 zinc finger occupies 317-369; the sequence is DKRCQFCKEWCIQKESLSCDECGVCAHLYCMDPPLDRKPNKDVVWTCFSCLQK. The SANT domain maps to 555–606; that stretch reads LKEPSFTAVEIRKFEEAVEKFGSELRPVCEYVGTQPMSMIVRFYYNWKKTER. Residues 1038-1097 form a PHD-type 2 zinc finger; the sequence is RTFCSVCKEKFNDNDNYEVVCGNCGLTVHYFCYAIKLPKDMKKNTNLKTFKWLCDPCSND. Residues 1041–1095 form an RING-type; degenerate zinc finger; sequence CSVCKEKFNDNDNYEVVCGNCGLTVHYFCYAIKLPKDMKKNTNLKTFKWLCDPCS. Residues 1105–1153 form a C2HC pre-PHD-type zinc finger; it reads TYQCSMCPTKDYDYDRYRSQSFKICPDALKCTSLGTWVHLVCSLFNEDI. The PHD-type 3; degenerate zinc-finger motif lies at 1177–1231; sequence FTCGVCRINGGGLVKCNKCQYRYHITCAQNSSNFKLMFEKKNMSVDTTLPCIKDV.

Component of the Snt2C complex composed of SNT2, ECM5 and RPD3. Interacts with the E2 ubiquitin-conjugating enzyme UBC4 and histones H3 and H4. Binding is enhanced to methylated histone H3K36me3.

The protein localises to the cytoplasm. Its subcellular location is the nucleus. It carries out the reaction S-ubiquitinyl-[E2 ubiquitin-conjugating enzyme]-L-cysteine + [acceptor protein]-L-lysine = [E2 ubiquitin-conjugating enzyme]-L-cysteine + N(6)-ubiquitinyl-[acceptor protein]-L-lysine.. Transcriptional regulator that, together with ECM5, recruits histone deacetylase RPD3 to a small number of promoters of stress-response genes in response to oxidative stress. Probable ubiquitin-protein ligase involved in the degradation-related ubiquitination of histones. Contributes to the post-translational regulation of histone protein levels by polyubiquitination of excess histones for subsequent degradation. In Saccharomyces cerevisiae (strain ATCC 204508 / S288c) (Baker's yeast), this protein is E3 ubiquitin-protein ligase SNT2.